The chain runs to 61 residues: Double gene block protein 2 (61 aa).

Topologically, residues 1–12 are cytoplasmic; the sequence is MACCRCDSSPGD. The helical; Signal-anchor for type II membrane protein transmembrane segment at 13–33 threads the bilayer; that stretch reads YSGALLILFISFVFFYITSLS. Residues 34–61 are Lumenal-facing; sequence PQGNTYVHHFDSSSVKTQYVGISTNGDG.

This sequence belongs to the gammacarmovirus double gene block protein 2 family.

The protein resides in the host endoplasmic reticulum membrane. In terms of biological role, cell-to-cell movement function. This Melon necrotic spot virus (MNSV) protein is Double gene block protein 2.